The primary structure comprises 308 residues: NAD-dependent protein deacylase SIR4 (308 aa).

The transit peptide at 1–16 directs the protein to the mitochondrion; sequence MAATKLHPALRNAIRA. The Deacetylase sirtuin-type domain occupies 28-308; the sequence is TFDVQEGIKL…EVLPAALRQL (281 aa). Residues 53–73 and 129–132 contribute to the NAD(+) site; these read GAGI…RPPH and QNVD. Residue H147 is the Proton acceptor of the active site. Zn(2+)-binding residues include C155, C158, C211, and C214. Residues 251 to 253, 277 to 279, and I297 each bind NAD(+); these read GTS and NSG.

It belongs to the sirtuin family. Class II subfamily. Zn(2+) serves as cofactor.

Its subcellular location is the mitochondrion matrix. The catalysed reaction is N(6)-acetyl-L-lysyl-[protein] + NAD(+) + H2O = 2''-O-acetyl-ADP-D-ribose + nicotinamide + L-lysyl-[protein]. Functionally, NAD-dependent protein deacylase. Catalyzes the NAD-dependent hydrolysis of acyl groups from lysine residues. The protein is NAD-dependent protein deacylase SIR4 of Monosiga brevicollis (Choanoflagellate).